A 505-amino-acid polypeptide reads, in one-letter code: Glutamate--tRNA ligase (505 aa).

The 'HIGH' region signature appears at 12 to 22; the sequence is PSPTGALHIGG. A 'KMSKS' region motif is present at residues 260 to 264; sequence KLSKR. Lysine 263 is a binding site for ATP.

It belongs to the class-I aminoacyl-tRNA synthetase family. Glutamate--tRNA ligase type 1 subfamily. In terms of assembly, monomer.

It localises to the cytoplasm. It catalyses the reaction tRNA(Glu) + L-glutamate + ATP = L-glutamyl-tRNA(Glu) + AMP + diphosphate. Catalyzes the attachment of glutamate to tRNA(Glu) in a two-step reaction: glutamate is first activated by ATP to form Glu-AMP and then transferred to the acceptor end of tRNA(Glu). The chain is Glutamate--tRNA ligase from Phocaeicola vulgatus (strain ATCC 8482 / DSM 1447 / JCM 5826 / CCUG 4940 / NBRC 14291 / NCTC 11154) (Bacteroides vulgatus).